A 142-amino-acid polypeptide reads, in one-letter code: 5-hydroxymethyl-dUMP N-hydrolase (142 aa).

Residues Gly-7, Ile-9, Arg-10, Gly-11, Ser-78, Gly-80, Glu-84, and Ser-108 each contribute to the 5-hydroxymethyl-dUMP site.

It belongs to the 2'-deoxynucleoside 5'-phosphate N-hydrolase 1 family. Monomer and homodimer.

The protein localises to the cytoplasm. Its subcellular location is the nucleus. The enzyme catalyses 5-hydroxymethyl-dUMP + H2O = 5-hydroxymethyluracil + 2-deoxy-D-ribose 5-phosphate. Its function is as follows. Part of a nucleotide salvage pathway that eliminates epigenetically modified 5-hydroxymethyl-dCMP (hmdCMP) in a two-step process entailing deamination to cytotoxic 5-hydroxymethyl-dUMP (hmdUMP), followed by its hydrolysis into 5-hydroxymethyluracil (hmU) and 2-deoxy-D-ribose 5-phosphate (deoxyribosephosphate). Catalyzes the second step in that pathway, the hydrolysis of the N-glycosidic bond in hmdUMP, degrading this cytotoxic nucleotide to avoid its genomic integration. The chain is 5-hydroxymethyl-dUMP N-hydrolase (dnph1) from Tetraodon nigroviridis (Spotted green pufferfish).